Reading from the N-terminus, the 416-residue chain is Serine hydroxymethyltransferase (416 aa).

Residues Leu-121 and 125-127 contribute to the (6S)-5,6,7,8-tetrahydrofolate site; that span reads GHL. Lys-229 is subject to N6-(pyridoxal phosphate)lysine. Residue 354–356 coordinates (6S)-5,6,7,8-tetrahydrofolate; it reads SPF.

It belongs to the SHMT family. As to quaternary structure, homodimer. The cofactor is pyridoxal 5'-phosphate.

Its subcellular location is the cytoplasm. The catalysed reaction is (6R)-5,10-methylene-5,6,7,8-tetrahydrofolate + glycine + H2O = (6S)-5,6,7,8-tetrahydrofolate + L-serine. Its pathway is one-carbon metabolism; tetrahydrofolate interconversion. It functions in the pathway amino-acid biosynthesis; glycine biosynthesis; glycine from L-serine: step 1/1. Its function is as follows. Catalyzes the reversible interconversion of serine and glycine with tetrahydrofolate (THF) serving as the one-carbon carrier. This reaction serves as the major source of one-carbon groups required for the biosynthesis of purines, thymidylate, methionine, and other important biomolecules. Also exhibits THF-independent aldolase activity toward beta-hydroxyamino acids, producing glycine and aldehydes, via a retro-aldol mechanism. The protein is Serine hydroxymethyltransferase of Halorhodospira halophila (strain DSM 244 / SL1) (Ectothiorhodospira halophila (strain DSM 244 / SL1)).